A 730-amino-acid polypeptide reads, in one-letter code: Polyribonucleotide nucleotidyltransferase (730 aa).

Residues aspartate 489 and aspartate 495 each coordinate Mg(2+). The KH domain occupies 556-615 (PKIDTIKVDVDKIKIVIGKGGETIDKIIEETGVKIDIDEDGNIAIYSSDQEAINRTKEII). The S1 motif domain occupies 625–693 (GEIYEAEVVR…DKGRIDASMK (69 aa)). The tract at residues 691-730 (SMKALLPRPPRSEKSNKEDHQSVRHHGSPKDDKGKEKYDK) is disordered. Basic and acidic residues predominate over residues 700–730 (PRSEKSNKEDHQSVRHHGSPKDDKGKEKYDK).

This sequence belongs to the polyribonucleotide nucleotidyltransferase family. The cofactor is Mg(2+).

It is found in the cytoplasm. The enzyme catalyses RNA(n+1) + phosphate = RNA(n) + a ribonucleoside 5'-diphosphate. Involved in mRNA degradation. Catalyzes the phosphorolysis of single-stranded polyribonucleotides processively in the 3'- to 5'-direction. The sequence is that of Polyribonucleotide nucleotidyltransferase from Streptococcus mutans serotype c (strain ATCC 700610 / UA159).